The following is a 728-amino-acid chain: LPS-assembly protein LptD (728 aa).

Residues 1–21 (MSALPGFTLAALLLNVSLAEA) form the signal peptide.

It belongs to the LptD family. As to quaternary structure, component of the lipopolysaccharide transport and assembly complex. Interacts with LptE and LptA.

The protein resides in the cell outer membrane. Together with LptE, is involved in the assembly of lipopolysaccharide (LPS) at the surface of the outer membrane. The protein is LPS-assembly protein LptD of Thiobacillus denitrificans (strain ATCC 25259 / T1).